We begin with the raw amino-acid sequence, 255 residues long: Acetyl-coenzyme A carboxylase carboxyl transferase subunit alpha (255 aa).

A CoA carboxyltransferase C-terminal domain is found at 1–235; that stretch reads MNIAKIVREA…KKELQTELAR (235 aa).

This sequence belongs to the AccA family. In terms of assembly, acetyl-CoA carboxylase is a heterohexamer composed of biotin carboxyl carrier protein (AccB), biotin carboxylase (AccC) and two subunits each of ACCase subunit alpha (AccA) and ACCase subunit beta (AccD).

Its subcellular location is the cytoplasm. It carries out the reaction N(6)-carboxybiotinyl-L-lysyl-[protein] + acetyl-CoA = N(6)-biotinyl-L-lysyl-[protein] + malonyl-CoA. The protein operates within lipid metabolism; malonyl-CoA biosynthesis; malonyl-CoA from acetyl-CoA: step 1/1. Component of the acetyl coenzyme A carboxylase (ACC) complex. First, biotin carboxylase catalyzes the carboxylation of biotin on its carrier protein (BCCP) and then the CO(2) group is transferred by the carboxyltransferase to acetyl-CoA to form malonyl-CoA. This Streptococcus pneumoniae serotype 2 (strain D39 / NCTC 7466) protein is Acetyl-coenzyme A carboxylase carboxyl transferase subunit alpha.